The primary structure comprises 320 residues: Beta-ketoacyl-[acyl-carrier-protein] synthase III (320 aa).

Active-site residues include cysteine 112 and histidine 245. Positions 246 to 250 are ACP-binding; sequence QANIR. Residue asparagine 275 is part of the active site.

It belongs to the thiolase-like superfamily. FabH family. As to quaternary structure, homodimer.

It localises to the cytoplasm. It carries out the reaction malonyl-[ACP] + acetyl-CoA + H(+) = 3-oxobutanoyl-[ACP] + CO2 + CoA. The protein operates within lipid metabolism; fatty acid biosynthesis. Its function is as follows. Catalyzes the condensation reaction of fatty acid synthesis by the addition to an acyl acceptor of two carbons from malonyl-ACP. Catalyzes the first condensation reaction which initiates fatty acid synthesis and may therefore play a role in governing the total rate of fatty acid production. Possesses both acetoacetyl-ACP synthase and acetyl transacylase activities. Its substrate specificity determines the biosynthesis of branched-chain and/or straight-chain of fatty acids. In Streptococcus thermophilus (strain CNRZ 1066), this protein is Beta-ketoacyl-[acyl-carrier-protein] synthase III.